A 123-amino-acid polypeptide reads, in one-letter code: Protein TraJ (123 aa).

As to quaternary structure, monomer.

Its subcellular location is the cytoplasm. Transfer of plasmid RP4 during bacterial conjugation requires the plasmid-encoded TraJ protein, which binds to a 19-base pair invert sequence repetition within the transfer origin. TraJ protein is bound to only one side of the DNA helix. This nucleoprotein structure is the initial complex in the pathway to assemble a functional relaxosome. The chain is Protein TraJ (traJ) from Escherichia coli.